The sequence spans 294 residues: Small ribosomal subunit protein uS2 (294 aa).

Over residues 261–274 the composition is skewed to basic and acidic residues; that stretch reads MDEDADSKKSKAEE. A disordered region spans residues 261–294; the sequence is MDEDADSKKSKAEEPVIPTAEEPAITTIEVDQNE.

Belongs to the universal ribosomal protein uS2 family.

The polypeptide is Small ribosomal subunit protein uS2 (Leptospira borgpetersenii serovar Hardjo-bovis (strain JB197)).